The chain runs to 475 residues: Ribulose bisphosphate carboxylase large chain (475 aa).

The propeptide occupies 1–2 (MS). Residue Pro-3 is modified to N-acetylproline. N6,N6,N6-trimethyllysine is present on Lys-14. Substrate-binding residues include Asn-123 and Thr-173. The active-site Proton acceptor is Lys-175. Lys-177 provides a ligand contact to substrate. Mg(2+)-binding residues include Lys-201, Asp-203, and Glu-204. The residue at position 201 (Lys-201) is an N6-carboxylysine. His-294 functions as the Proton acceptor in the catalytic mechanism. Substrate is bound by residues Arg-295, His-327, and Ser-379.

It belongs to the RuBisCO large chain family. Type I subfamily. Heterohexadecamer of 8 large chains and 8 small chains; disulfide-linked. The disulfide link is formed within the large subunit homodimers. Mg(2+) is required as a cofactor. In terms of processing, the disulfide bond which can form in the large chain dimeric partners within the hexadecamer appears to be associated with oxidative stress and protein turnover.

It localises to the plastid. Its subcellular location is the chloroplast. It carries out the reaction 2 (2R)-3-phosphoglycerate + 2 H(+) = D-ribulose 1,5-bisphosphate + CO2 + H2O. The catalysed reaction is D-ribulose 1,5-bisphosphate + O2 = 2-phosphoglycolate + (2R)-3-phosphoglycerate + 2 H(+). RuBisCO catalyzes two reactions: the carboxylation of D-ribulose 1,5-bisphosphate, the primary event in carbon dioxide fixation, as well as the oxidative fragmentation of the pentose substrate in the photorespiration process. Both reactions occur simultaneously and in competition at the same active site. The polypeptide is Ribulose bisphosphate carboxylase large chain (Stellaria media (Common chickweed)).